The following is a 115-amino-acid chain: Iron-sulfur cluster insertion protein ErpA (115 aa).

Residues cysteine 43, cysteine 107, and cysteine 109 each coordinate iron-sulfur cluster.

Belongs to the HesB/IscA family. In terms of assembly, homodimer. Iron-sulfur cluster is required as a cofactor.

Required for insertion of 4Fe-4S clusters for at least IspG. This chain is Iron-sulfur cluster insertion protein ErpA, found in Photorhabdus laumondii subsp. laumondii (strain DSM 15139 / CIP 105565 / TT01) (Photorhabdus luminescens subsp. laumondii).